The sequence spans 101 residues: Large ribosomal subunit protein uL24 (101 aa).

It belongs to the universal ribosomal protein uL24 family. As to quaternary structure, part of the 50S ribosomal subunit.

One of two assembly initiator proteins, it binds directly to the 5'-end of the 23S rRNA, where it nucleates assembly of the 50S subunit. Its function is as follows. One of the proteins that surrounds the polypeptide exit tunnel on the outside of the subunit. This Streptococcus thermophilus (strain ATCC BAA-491 / LMD-9) protein is Large ribosomal subunit protein uL24.